Consider the following 89-residue polypeptide: Small ribosomal subunit protein uS15 (89 aa).

The protein belongs to the universal ribosomal protein uS15 family. Part of the 30S ribosomal subunit. Forms a bridge to the 50S subunit in the 70S ribosome, contacting the 23S rRNA.

Its function is as follows. One of the primary rRNA binding proteins, it binds directly to 16S rRNA where it helps nucleate assembly of the platform of the 30S subunit by binding and bridging several RNA helices of the 16S rRNA. In terms of biological role, forms an intersubunit bridge (bridge B4) with the 23S rRNA of the 50S subunit in the ribosome. The sequence is that of Small ribosomal subunit protein uS15 from Staphylococcus saprophyticus subsp. saprophyticus (strain ATCC 15305 / DSM 20229 / NCIMB 8711 / NCTC 7292 / S-41).